The chain runs to 910 residues: DNA mismatch repair protein MutS (910 aa).

Residue 658 to 665 (GPNMGGKS) participates in ATP binding.

It belongs to the DNA mismatch repair MutS family.

In terms of biological role, this protein is involved in the repair of mismatches in DNA. It is possible that it carries out the mismatch recognition step. This protein has a weak ATPase activity. In Brucella anthropi (strain ATCC 49188 / DSM 6882 / CCUG 24695 / JCM 21032 / LMG 3331 / NBRC 15819 / NCTC 12168 / Alc 37) (Ochrobactrum anthropi), this protein is DNA mismatch repair protein MutS.